The sequence spans 568 residues: MARFAVIGLTFLLLLGTSLSARSDEETRERFYGNVVNSTAPGNGEGSIAKMFDRVLEKEFSENDSPEGSDGASFNSSVADQQAEIETVAKVTHEKGKRNDTQENNGTRPFQLQDVFSLENEDSDDMTLIDKKNNVFVMSNKKSKYPILQVDLRLISDLVVIIVFAAIGGIVFSCLGQPVIVGYLLAGSIIGPGGLKFISEMVQVETVAQFGVVFLLFALGLEFSMTKLKVVGPVAVLGGLLQIVLLMFLCGVTALLCGARLSEGIFVGAFLSMSSTAVVVKFLVERNSTSSLHGQVTIGILIFQDCVVGLLFALLPVLGGNSGLLQGIISMGKLLLILSIYLTVASLLTWSFVPRFLKLMIQLSSQTNELYQLAAVAFCLLSAWCSDKLGLSLELGSFVAGVMLSTTEFAQHTLEQVEPIRNLFAALFLSSIGMLINVHFLWNHVDILLASVILVIVIKTAIAAVVVKAFRYNMRISFHVGVLLAQIGEFAFVLLSRASNLHVIEGKMYLLLLGTTALSLVTTPLLFKLIPSAMNLGVLLRWFPSENSSPNESLQEKASLIEVHNRTK.

The signal sequence occupies residues 1-20; the sequence is MARFAVIGLTFLLLLGTSLS. The disordered stretch occupies residues 59–78; it reads EFSENDSPEGSDGASFNSSV. 12 helical membrane passes run 154-174, 178-198, 201-221, 230-250, 264-284, 298-318, 334-354, 389-409, 422-442, 447-467, 476-496, and 510-530; these read LISDLVVIIVFAAIGGIVFSC, PVIVGYLLAGSIIGPGGLKFI, MVQVETVAQFGVVFLLFALGL, VVGPVAVLGGLLQIVLLMFLC, GIFVGAFLSMSSTAVVVKFLV, IGILIFQDCVVGLLFALLPVL, LLLILSIYLTVASLLTWSFVP, LGLSLELGSFVAGVMLSTTEF, NLFAALFLSSIGMLINVHFLW, ILLASVILVIVIKTAIAAVVV, ISFHVGVLLAQIGEFAFVLLS, and LLLLGTTALSLVTTPLLFKLI.

This sequence belongs to the monovalent cation:proton antiporter 2 (CPA2) transporter (TC 2.A.37) family. KEA (TC 2.A.37.1) subfamily. As to expression, expressed in roots, stems, leaves, flowers and silique.

It is found in the golgi apparatus membrane. Its subcellular location is the golgi apparatus. The protein localises to the trans-Golgi network membrane. The protein resides in the prevacuolar compartment membrane. It localises to the endomembrane system. It catalyses the reaction K(+)(in) + H(+)(out) = K(+)(out) + H(+)(in). In terms of biological role, electroneutral K(+)/H(+) efflux antiporter involved in K(+) homeostasis and osmotic adjustment. Together with KEA4 and KEA6, promotes growth and development, and facilitates endosomal pH and ions homeostasis, as well as salt tolerance (e.g. K(+), NaCl and LiCl), probably by supporting cell wall biosynthesis during rapid etiolated seedling growth. This chain is K(+) efflux antiporter 5, found in Arabidopsis thaliana (Mouse-ear cress).